The sequence spans 635 residues: Biosynthetic arginine decarboxylase (635 aa).

Lys-100 bears the N6-(pyridoxal phosphate)lysine mark. Residue 282–292 (IDIGGGLGVDY) coordinates substrate.

This sequence belongs to the Orn/Lys/Arg decarboxylase class-II family. SpeA subfamily. The cofactor is Mg(2+). It depends on pyridoxal 5'-phosphate as a cofactor.

The enzyme catalyses L-arginine + H(+) = agmatine + CO2. It participates in amine and polyamine biosynthesis; agmatine biosynthesis; agmatine from L-arginine: step 1/1. Catalyzes the biosynthesis of agmatine from arginine. The protein is Biosynthetic arginine decarboxylase of Pelobacter propionicus (strain DSM 2379 / NBRC 103807 / OttBd1).